The primary structure comprises 822 residues: Epidermal growth factor receptor kinase substrate 8 (822 aa).

Ser-58 is modified (phosphoserine). In terms of domain architecture, PTB spans 64–194 (QYRVEHLTTF…SDSKGGKQKR (131 aa)). 3 disordered regions span residues 204–224 (KADP…PGTV), 295–320 (SELS…TLRA), and 460–487 (VANA…DYPP). Over residues 208–221 (GIPPPPRAPAPVPP) the composition is skewed to pro residues. Thr-223 carries the phosphothreonine modification. Basic residues predominate over residues 299–309 (KRKKSKKSKRK). The residue at position 317 (Thr-317) is a Phosphothreonine. Positions 466 to 477 (QQRKQDSKRQST) are enriched in basic and acidic residues. Residue Ser-476 is modified to Phosphoserine. Residues 531–590 (QPKKYAKSKYDFVARNSSELSVMKDDVLEILDDRKQWWKVRNASGDSGFVPNNILDIMRT) form the SH3 domain. Positions 608–685 (KQRTEYGPRS…KQLPVDRRKS (78 aa)) are disordered. The segment covering 623-649 (APSPPPTPAPVPVPLPPSAPAPVPVPK) has biased composition (pro residues). Ser-625 bears the Phosphoserine; by MAPK mark. Thr-629 is modified (phosphothreonine; by MAPK). Residues 649 to 822 (KVPANVTRQN…VESFDEGSSH (174 aa)) are effector region. Phosphoserine is present on residues Ser-659, Ser-662, and Ser-685. The segment covering 671–685 (DSQRYKQLPVDRRKS) has biased composition (basic and acidic residues). Residues 680–698 (VDRRKSQMEEVQDELFQRL) are amphipathic helix. Helix bundle stretches follow at residues 718 to 738 (VINI…QSKG), 752 to 757 (GAQLFS), 762 to 767 (ELRSVC), and 766 to 785 (VCPE…AALE). The interval 787 to 822 (SSGSSELQEIMRRRQEKISAAASDSGVESFDEGSSH) is disordered. A phosphoserine mark is found at Ser-811 and Ser-815.

This sequence belongs to the EPS8 family. In terms of assembly, homodimer. Part of a complex consisting of ABI1, EPS8 and SOS1. Interacts with BAIAP2. Interacts with SHB and LANCL1. Interacts with EGFR; mediates EPS8 phosphorylation. Interacts with MYO15A and WHRN. In terms of processing, ubiquitinated by the SCF(FBXW5) E3 ubiquitin-protein ligase complex during G2 phase, leading to its transient degradation and subsequent cell shape changes required to allow mitotic progression. Reappears at the midzone of dividing cells. Post-translationally, phosphorylation at Ser-625 and Thr-629 by MAPK following BDNF treatment promotes removal from actin and filopodia formation. Phosphorylated by several receptor tyrosine kinases. Expressed in neuronal cell body and neurites, and prominently enriched in the axonal growth cone.

It localises to the synapse. The protein localises to the synaptosome. Its subcellular location is the cytoplasm. The protein resides in the cell cortex. It is found in the cell projection. It localises to the ruffle membrane. The protein localises to the stereocilium. Its subcellular location is the growth cone. Its function is as follows. Signaling adapter that controls various cellular protrusions by regulating actin cytoskeleton dynamics and architecture. Depending on its association with other signal transducers, can regulate different processes. Together with SOS1 and ABI1, forms a trimeric complex that participates in transduction of signals from Ras to Rac by activating the Rac-specific guanine nucleotide exchange factor (GEF) activity. Acts as a direct regulator of actin dynamics by binding actin filaments and has both barbed-end actin filament capping and actin bundling activities depending on the context. Displays barbed-end actin capping activity when associated with ABI1, thereby regulating actin-based motility process: capping activity is auto-inhibited and inhibition is relieved upon ABI1 interaction. Also shows actin bundling activity when associated with BAIAP2, enhancing BAIAP2-dependent membrane extensions and promoting filopodial protrusions. Involved in the regulation of processes such as axonal filopodia growth, stereocilia length, dendritic cell migration and cancer cell migration and invasion. Acts as a regulator of axonal filopodia formation in neurons: in the absence of neurotrophic factors, negatively regulates axonal filopodia formation via actin-capping activity. In contrast, it is phosphorylated in the presence of BDNF leading to inhibition of its actin-capping activity and stimulation of filopodia formation. Component of a complex with WHRN and MYO15A that localizes at stereocilia tips and is required for elongation of the stereocilia actin core. Indirectly involved in cell cycle progression; its degradation following ubiquitination being required during G2 phase to promote cell shape changes. This Rattus norvegicus (Rat) protein is Epidermal growth factor receptor kinase substrate 8 (Eps8).